We begin with the raw amino-acid sequence, 186 residues long: MAQRERNREERGREERDSEFVDKLVHINRVAKVVKGGRRFGFAALVVVGDQKGRVGFGHGKAREVPEAIRKATEAAKRDMIFVPLRSGRTLHHDVEGRHGAGKVLLRAAPAGKGIIAGGPMRAVFETLGVQDVVAKSLGSSNPYNMVRATFDALKHQMHPKDIAAQRGIKYSTLQARRHDVVGSEE.

Residues 20–83 (FVDKLVHINR…EAAKRDMIFV (64 aa)) enclose the S5 DRBM domain.

The protein belongs to the universal ribosomal protein uS5 family. As to quaternary structure, part of the 30S ribosomal subunit. Contacts proteins S4 and S8.

In terms of biological role, with S4 and S12 plays an important role in translational accuracy. Functionally, located at the back of the 30S subunit body where it stabilizes the conformation of the head with respect to the body. This Brucella abortus (strain S19) protein is Small ribosomal subunit protein uS5.